Here is a 309-residue protein sequence, read N- to C-terminus: Olfactory receptor 1L8 (309 aa).

At 1-26 the chain is on the extracellular side; it reads MERINHTSSVSEFILLGLSSRPEDQK. Asparagine 5 carries N-linked (GlcNAc...) asparagine glycosylation. A helical transmembrane segment spans residues 27–50; it reads TLFVLFLIVYLVTITGNLLIILAI. Residues 51–58 lie on the Cytoplasmic side of the membrane; sequence RFNPHLQT. A helical membrane pass occupies residues 59–80; it reads PMYFFLSFLSLTDICFTTSVVP. Over 81-101 the chain is Extracellular; that stretch reads KMLMNFLSEKKTISYAGCLTQ. Cysteines 98 and 190 form a disulfide. The chain crosses the membrane as a helical span at residues 102–121; it reads MYFLYALGNSDSCLLAVMAF. Topologically, residues 122-140 are cytoplasmic; it reads DRYVAVCDPFHYVTTMSHH. A helical transmembrane segment spans residues 141-159; sequence HCVLLVAFSCSFPHLHSLL. Topologically, residues 160–197 are extracellular; the sequence is HTLLLNRLTFCDSNVIHHFLCDLSPVLKLSCSSIFVNE. A helical transmembrane segment spans residues 198 to 220; it reads IVQMTEAPIVLVTRFLCIAFSYI. Residues 221–237 lie on the Cytoplasmic side of the membrane; it reads RILTTVLKIPSTSGKRK. The chain crosses the membrane as a helical span at residues 238–260; the sequence is AFSTCGFYLTVVTLFYGSIFCVY. Over 261 to 272 the chain is Extracellular; that stretch reads LQPPSTYAVKDH. A helical membrane pass occupies residues 273–292; it reads VATIVYTVLSSMLNPFIYSL. Over 293–309 the chain is Cytoplasmic; sequence RNKDLKQGLRKLMSKRS.

It belongs to the G-protein coupled receptor 1 family.

The protein localises to the cell membrane. In terms of biological role, odorant receptor. The chain is Olfactory receptor 1L8 (OR1L8) from Homo sapiens (Human).